The chain runs to 279 residues: Energy-coupling factor transporter ATP-binding protein EcfA1 (279 aa).

The region spanning 6–240 (VRLEHVFYKY…ADAMREIGLG (235 aa)) is the ABC transporter domain. 40–47 (GHNGSGKS) serves as a coordination point for ATP.

Belongs to the ABC transporter superfamily. Energy-coupling factor EcfA family. In terms of assembly, forms a stable energy-coupling factor (ECF) transporter complex composed of 2 membrane-embedded substrate-binding proteins (S component), 2 ATP-binding proteins (A component) and 2 transmembrane proteins (T component).

The protein resides in the cell membrane. In terms of biological role, ATP-binding (A) component of a common energy-coupling factor (ECF) ABC-transporter complex. Unlike classic ABC transporters this ECF transporter provides the energy necessary to transport a number of different substrates. The protein is Energy-coupling factor transporter ATP-binding protein EcfA1 of Listeria monocytogenes serotype 4b (strain F2365).